We begin with the raw amino-acid sequence, 426 residues long: Glutamate-1-semialdehyde 2,1-aminomutase (426 aa).

At Lys264 the chain carries N6-(pyridoxal phosphate)lysine.

Belongs to the class-III pyridoxal-phosphate-dependent aminotransferase family. HemL subfamily. The cofactor is pyridoxal 5'-phosphate.

It localises to the cytoplasm. The enzyme catalyses (S)-4-amino-5-oxopentanoate = 5-aminolevulinate. Its pathway is porphyrin-containing compound metabolism; protoporphyrin-IX biosynthesis; 5-aminolevulinate from L-glutamyl-tRNA(Glu): step 2/2. The protein is Glutamate-1-semialdehyde 2,1-aminomutase of Methanocella arvoryzae (strain DSM 22066 / NBRC 105507 / MRE50).